The chain runs to 187 residues: NADH-dependent FMN reductase SfnF (187 aa).

The protein belongs to the SsuE family.

It carries out the reaction FMNH2 + NAD(+) = FMN + NADH + 2 H(+). In terms of biological role, involved in the dimethyl sulfide degradation pathway. Catalyzes the NADH-dependent reduction of FMN. The protein is NADH-dependent FMN reductase SfnF of Pseudomonas fluorescens (strain Pf0-1).